We begin with the raw amino-acid sequence, 400 residues long: Elongation factor Tu (400 aa).

Residues 10–208 (KPHVNVGTIG…AMDNYIPEPQ (199 aa)) enclose the tr-type G domain. The tract at residues 19-26 (GHIDHGKS) is G1. Residue 19–26 (GHIDHGKS) participates in GTP binding. Serine 26 lines the Mg(2+) pocket. The tract at residues 60 to 64 (GITIN) is G2. The tract at residues 81–84 (DCPG) is G3. GTP contacts are provided by residues 81–85 (DCPGH) and 136–139 (NKTD). The tract at residues 136–139 (NKTD) is G4. A G5 region spans residues 174-176 (SAL).

The protein belongs to the TRAFAC class translation factor GTPase superfamily. Classic translation factor GTPase family. EF-Tu/EF-1A subfamily. In terms of assembly, monomer.

The protein localises to the cytoplasm. It catalyses the reaction GTP + H2O = GDP + phosphate + H(+). In terms of biological role, GTP hydrolase that promotes the GTP-dependent binding of aminoacyl-tRNA to the A-site of ribosomes during protein biosynthesis. This chain is Elongation factor Tu, found in Thermotoga petrophila (strain ATCC BAA-488 / DSM 13995 / JCM 10881 / RKU-1).